Here is a 173-residue protein sequence, read N- to C-terminus: Peptide methionine sulfoxide reductase MsrA (173 aa).

The active site involves C10.

Belongs to the MsrA Met sulfoxide reductase family.

The catalysed reaction is L-methionyl-[protein] + [thioredoxin]-disulfide + H2O = L-methionyl-(S)-S-oxide-[protein] + [thioredoxin]-dithiol. It catalyses the reaction [thioredoxin]-disulfide + L-methionine + H2O = L-methionine (S)-S-oxide + [thioredoxin]-dithiol. In terms of biological role, has an important function as a repair enzyme for proteins that have been inactivated by oxidation. Catalyzes the reversible oxidation-reduction of methionine sulfoxide in proteins to methionine. The protein is Peptide methionine sulfoxide reductase MsrA of Psychrobacter arcticus (strain DSM 17307 / VKM B-2377 / 273-4).